The primary structure comprises 827 residues: Periplasmic nitrate reductase (827 aa).

Positions 1-32 form a signal peptide, tat-type signal; that stretch reads MNLSRRDFMKANAALAAASVAGLIIPVKNVNA. The 57-residue stretch at 37-93 folds into the 4Fe-4S Mo/W bis-MGD-type domain; it reads ITWDKAVCRFCGTGCAVLVGTKDGRVVASQGDPDAEVNRGLNCIKGYFLPKIMYGKD. 4 residues coordinate [4Fe-4S] cluster: Cys-44, Cys-47, Cys-51, and Cys-79. Mo-bis(molybdopterin guanine dinucleotide)-binding positions include Lys-81, Gln-148, Asn-173, Cys-177, 210-217, 242-246, 261-263, Met-372, Gln-376, Asn-482, 508-509, Lys-531, Asp-558, and 717-726; these read WGSNMAEM, STFEH, QSD, SD, and TGRILEHWHT. Substrate is bound at residue Phe-793. Residues Asn-801 and Lys-818 each contribute to the Mo-bis(molybdopterin guanine dinucleotide) site.

It belongs to the prokaryotic molybdopterin-containing oxidoreductase family. NasA/NapA/NarB subfamily. In terms of assembly, component of the periplasmic nitrate reductase NapAB complex composed of NapA and NapB. The cofactor is [4Fe-4S] cluster. Requires Mo-bis(molybdopterin guanine dinucleotide) as cofactor. Predicted to be exported by the Tat system. The position of the signal peptide cleavage has not been experimentally proven.

It is found in the periplasm. The enzyme catalyses 2 Fe(II)-[cytochrome] + nitrate + 2 H(+) = 2 Fe(III)-[cytochrome] + nitrite + H2O. Its function is as follows. Catalytic subunit of the periplasmic nitrate reductase complex NapAB. Receives electrons from NapB and catalyzes the reduction of nitrate to nitrite. The sequence is that of Periplasmic nitrate reductase from Histophilus somni (strain 129Pt) (Haemophilus somnus).